Here is an 879-residue protein sequence, read N- to C-terminus: Alanine--tRNA ligase (879 aa).

4 residues coordinate Zn(2+): H566, H570, C668, and H672.

The protein belongs to the class-II aminoacyl-tRNA synthetase family. Zn(2+) serves as cofactor.

Its subcellular location is the cytoplasm. The catalysed reaction is tRNA(Ala) + L-alanine + ATP = L-alanyl-tRNA(Ala) + AMP + diphosphate. Functionally, catalyzes the attachment of alanine to tRNA(Ala) in a two-step reaction: alanine is first activated by ATP to form Ala-AMP and then transferred to the acceptor end of tRNA(Ala). Also edits incorrectly charged Ser-tRNA(Ala) and Gly-tRNA(Ala) via its editing domain. In Oceanobacillus iheyensis (strain DSM 14371 / CIP 107618 / JCM 11309 / KCTC 3954 / HTE831), this protein is Alanine--tRNA ligase.